We begin with the raw amino-acid sequence, 254 residues long: MNTNNQETSNVVKLSVSRFERSTKNRHLLPILVERFDSSSPVTEWDVHVFTDDSHPVYPVFQPLVPCVFKFAQNHRLSTNILVDAGSKVTSWSCVYSKKIHPMVVHHPERMTGSFKKQERNDISLWIGTPTRAATVATSCDSSCFSSPTNDDDEGYDVCGMYDMRPPTTKCQGCSATVSPQSNNSVDEGYDVCGMYDMRPPTTNGHHATVTVNGQNKPVTPPPGIATNPNLTWTLRKFRFFFHQEPETTSIVLY.

This is an uncharacterized protein from Aedes vexans (Inland floodwater mosquito).